We begin with the raw amino-acid sequence, 192 residues long: Adenylate kinase (192 aa).

An ATP-binding site is contributed by 12-17 (GSGKTT). The interval 34-63 (STGDLLRAEVASGSELGKTIDSFISKGNLV) is NMP. AMP is bound by residues T35, R40, 61 to 63 (NLV), 88 to 91 (GYPR), and Q95. The LID stretch occupies residues 130 to 136 (GRNRGAD). R131 contacts ATP. Residues R133 and R145 each coordinate AMP. R173 contributes to the ATP binding site.

The protein belongs to the adenylate kinase family. In terms of assembly, monomer.

Its subcellular location is the cytoplasm. The enzyme catalyses AMP + ATP = 2 ADP. It functions in the pathway purine metabolism; AMP biosynthesis via salvage pathway; AMP from ADP: step 1/1. Its function is as follows. Catalyzes the reversible transfer of the terminal phosphate group between ATP and AMP. Plays an important role in cellular energy homeostasis and in adenine nucleotide metabolism. In Campylobacter jejuni subsp. jejuni serotype O:6 (strain 81116 / NCTC 11828), this protein is Adenylate kinase.